The chain runs to 208 residues: Large ribosomal subunit protein uL4 (208 aa).

Positions 51–79 (AKERAEVSFSTKKLKKQKGTGGARAGSRK) are disordered.

Belongs to the universal ribosomal protein uL4 family. In terms of assembly, part of the 50S ribosomal subunit.

Functionally, one of the primary rRNA binding proteins, this protein initially binds near the 5'-end of the 23S rRNA. It is important during the early stages of 50S assembly. It makes multiple contacts with different domains of the 23S rRNA in the assembled 50S subunit and ribosome. Its function is as follows. Forms part of the polypeptide exit tunnel. The sequence is that of Large ribosomal subunit protein uL4 from Cytophaga hutchinsonii (strain ATCC 33406 / DSM 1761 / CIP 103989 / NBRC 15051 / NCIMB 9469 / D465).